The chain runs to 1079 residues: Electrogenic sodium bicarbonate cotransporter 1 (1079 aa).

Residues 1–62 (MEDEAVLDRG…EKKEKERISE (62 aa)) are required for interaction with AHCYL1. The Cytoplasmic portion of the chain corresponds to 1–466 (MEDEAVLDRG…FASDFYDALN (466 aa)). E21 carries the post-translational modification Phosphoserine. At Y30 the chain carries Phosphotyrosine. The segment covering 39 to 52 (YRRRRRHKRKAGHK) has biased composition (basic residues). The tract at residues 39–78 (YRRRRRHKRKAGHKEKKEKERISENYSDKSDVENADESSS) is disordered. Basic and acidic residues predominate over residues 53 to 70 (EKKEKERISENYSDKSDV). Phosphoserine occurs at positions 61, 65, 68, 223, 232, 233, and 245. A disordered region spans residues 235 to 266 (SRMFSNPDNGSPAMTHRNLTSSSLNDISDKPE). Phosphothreonine is present on residues T249 and T254. The segment covering 251 to 260 (RNLTSSSLND) has biased composition (polar residues). Residues S256, S257, and S262 each carry the phosphoserine modification. A helical transmembrane segment spans residues 467–491 (IQALSAILFIYLATVTNAITFGGLL). Over 492-501 (GDATDNMQGV) the chain is Extracellular. A helical transmembrane segment spans residues 502-520 (LESFLGTAVSGAIFCLFAG). Q521 is a topological domain (cytoplasmic). Residues 522–542 (PLTILSSTGPVLVFERLLFNF) form a discontinuously helical membrane-spanning segment. Residues 543–550 (SKDHNFDY) lie on the Extracellular side of the membrane. A helical transmembrane segment spans residues 551-571 (LEFRLWIGLWSAFMCLVLVAT). The Cytoplasmic portion of the chain corresponds to 572–585 (DASFLVQYFTRFTE). The chain crosses the membrane as a helical span at residues 586-609 (EGFSSLISFIFIYDAFKKMIKLAD). Residues 610 to 692 (YYPINSDFKV…GNNCDFVPDI (83 aa)) lie on the Extracellular side of the membrane. The chain crosses the membrane as a helical span at residues 693–710 (TLMSFILFLGTYTSSMAM). Residues 711–725 (KKFKTSRYFPTTARK) lie on the Cytoplasmic side of the membrane. A helical transmembrane segment spans residues 726–745 (LISDFAIILSILIFCVIDAL). The Extracellular segment spans residues 746–779 (VGVDTPKLIVPSEFKPTSPNRGWFVPPFGGNPWW). Positions 748-779 (VDTPKLIVPSEFKPTSPNRGWFVPPFGGNPWW) are interaction with CA4. The helical transmembrane segment at 780–807 (VCLAAAIPALLVTILIFMDQQITAVIVN) threads the bilayer. Topologically, residues 808–819 (RKEHKLKKGAGY) are cytoplasmic. Residues 820–836 (HLDLFWVAILMVVCSFM) traverse the membrane as a helical segment. Position 837 (A837) is a topological domain, extracellular. A discontinuously helical membrane pass occupies residues 838 to 855 (LPWYVAATVISIAHIDSL). Residues 856–877 (KMETETSAPGEQPKFLGVREQR) lie on the Cytoplasmic side of the membrane. A helical membrane pass occupies residues 878 to 894 (VTGTLVFILTGLSVFMA). The Extracellular segment spans residues 895 to 901 (PILKFIP). Residues 902 to 918 (MPVLYGVFLYMGVASLN) form a helical membrane-spanning segment. Topologically, residues 919–960 (GVQFMDRLKLLLMPLKHQPDFIYLRHVPLRRVHLFTFLQVLC) are cytoplasmic. An intramembrane region (discontinuously helical) is located at residues 961 to 986 (LALLWILKSTVAAIIFPVMILALVAV). Residues 987-1079 (RKGMDYLFSQ…STFLERHTSC (93 aa)) lie on the Cytoplasmic side of the membrane. Positions 1002–1004 (LDD) are CA2-binding. The tract at residues 1012–1079 (KKKEDEKKKK…STFLERHTSC (68 aa)) is disordered. S1026 and S1029 each carry phosphoserine. Positions 1030–1033 (DNDD) are CA2-binding. A phosphoserine mark is found at S1034 and S1044. The tract at residues 1057-1059 (FLS) is required for basolateral targeting. Over residues 1062 to 1079 (KPLDRERSSTFLERHTSC) the composition is skewed to basic and acidic residues. At S1069 the chain carries Phosphoserine.

Belongs to the anion exchanger (TC 2.A.31) family. Homodimer. Interacts with CA2/carbonic anhydrase 2 and CA4/carbonic anhydrase 4 which may regulate transporter activity. Isoform 1 but not isoform 2 interacts with AHCYL1 (via PEST domain when phosphorylated); the interaction increases SLC4A4 isoform 1 activity. Interacts with AHCYL2. Post-translationally, phosphorylation of Ser-1026 by PKA increases the binding of CA2 and changes the Na(+):HCO3(-) stoichiometry of the transporter from 3:1 to 2:1. Phosphorylated in presence of STK39 and dephosphorylated in presence of PP1 phosphatase; phosphorylation seems to inhibit SLC4A4 activity. In terms of processing, N-glycosylated. May not be necessary for the transporter basic functions. Isoform 1 is specifically expressed in pancreatic ducts and acini. Also expressed in parotid acinar cells and in the colonic crypts.

Its subcellular location is the basolateral cell membrane. It is found in the cell membrane. It catalyses the reaction 2 hydrogencarbonate(out) + Na(+)(out) = 2 hydrogencarbonate(in) + Na(+)(in). The enzyme catalyses 3 hydrogencarbonate(out) + Na(+)(out) = 3 hydrogencarbonate(in) + Na(+)(in). Activated by cyclic AMP. Electrogenic sodium/bicarbonate cotransporter with a Na(+):HCO3(-) stoichiometry varying from 1:2 to 1:3. May regulate bicarbonate influx/efflux at the basolateral membrane of cells and regulate intracellular pH. This is Electrogenic sodium bicarbonate cotransporter 1 (Slc4a4) from Mus musculus (Mouse).